The following is a 219-amino-acid chain: Ribose-5-phosphate isomerase A (219 aa).

Substrate-binding positions include 28 to 31 (SGST), 81 to 84 (DGAD), and 94 to 97 (KGGG). Glutamate 103 acts as the Proton acceptor in catalysis. Lysine 121 is a substrate binding site.

This sequence belongs to the ribose 5-phosphate isomerase family. As to quaternary structure, homodimer.

The enzyme catalyses aldehydo-D-ribose 5-phosphate = D-ribulose 5-phosphate. Its pathway is carbohydrate degradation; pentose phosphate pathway; D-ribose 5-phosphate from D-ribulose 5-phosphate (non-oxidative stage): step 1/1. In terms of biological role, catalyzes the reversible conversion of ribose-5-phosphate to ribulose 5-phosphate. The chain is Ribose-5-phosphate isomerase A from Histophilus somni (strain 2336) (Haemophilus somnus).